A 418-amino-acid polypeptide reads, in one-letter code: Protein SSXT (418 aa).

Ser2 bears the N-acetylserine mark. Positions 2-186 are transcriptional activation; sequence SVAFAAPRQR…NQMTMSQGQP (185 aa). An SH2-binding motif is present at residues 50-53; that stretch reads YQQM. Disordered stretches follow at residues 77–118 and 188–418; these read APPT…PAPH and GNYG…NYQQ. The span at 225–251 shows a compositional bias: low complexity; it reads YQGQQPPMGMMGQVNQGNHMMGQRQIP. Residues 309–318 are compositionally biased toward basic and acidic residues; the sequence is GYDRPYEDSS. Low complexity-rich tracts occupy residues 328 to 337, 345 to 366, and 376 to 393; these read QYGQQQDAYQ, YPPQ…QGYG, and YPNY…YRPT. 2 consecutive repeat copies span residues 344–356 and 357–369. The 2 X 13 AA imperfect tandem repeats stretch occupies residues 344-369; sequence GYPPQQQQYPGQQGYPGQQQGYGPSQ. An SH2-binding motif is present at residues 374–377; it reads PQYP. The short motif at 392-401 is the SH3-binding element; sequence PTQPGPPQPP. The span at 394 to 403 shows a compositional bias: pro residues; sequence QPGPPQPPQQ. Low complexity predominate over residues 404-418; that stretch reads RPYGYDQGQYGNYQQ. Residues 413-416 carry the SH2-binding motif; sequence YGNY.

It belongs to the SS18 family. As to quaternary structure, interacts with MLLT10. Isoform 1 interacts with RBM14 isoform 1. Isoform 2 interacts with RBM14 isoform 1. Component of the multiprotein chromatin-remodeling complexes SWI/SNF: SWI/SNF-A (BAF), SWI/SNF-B (PBAF) and related complexes. The canonical complex contains a catalytic subunit (either SMARCA4/BRG1/BAF190A or SMARCA2/BRM/BAF190B) and at least SMARCE1, ACTL6A/BAF53, SMARCC1/BAF155, SMARCC2/BAF170, and SMARCB1/SNF5/BAF47. Other subunits specific to each of the complexes may also be present permitting several possible combinations developmentally and tissue specific. Component of the SWI/SNF (GBAF) subcomplex, which includes at least BICRA or BICRAL (mutually exclusive), BRD9, SS18, the core BAF subunits, SMARCA2/BRM, SMARCA4/BRG1/BAF190A, ACTL6A/BAF53, SMARCC1/BAF155, and SMARCD1/BAF60A. In terms of tissue distribution, fairly ubiquitously expressed. Expressed in synovial sarcomas and in other human cell lines. The fusion genes SSXT-SSX1 and SSXT-SSX2 are expressed only in synovial sarcomas.

The protein resides in the nucleus. Functionally, appears to function synergistically with RBM14 as a transcriptional coactivator. Isoform 1 and isoform 2 function in nuclear receptor coactivation. Isoform 1 and isoform 2 function in general transcriptional coactivation. Component of SWI/SNF chromatin remodeling subcomplex GBAF that carries out key enzymatic activities, changing chromatin structure by altering DNA-histone contacts within a nucleosome in an ATP-dependent manner. The chain is Protein SSXT (SS18) from Homo sapiens (Human).